The primary structure comprises 102 residues: Small ribosomal subunit protein uS10 (102 aa).

Belongs to the universal ribosomal protein uS10 family. Part of the 30S ribosomal subunit.

Its function is as follows. Involved in the binding of tRNA to the ribosomes. This is Small ribosomal subunit protein uS10 from Bifidobacterium adolescentis (strain ATCC 15703 / DSM 20083 / NCTC 11814 / E194a).